Consider the following 102-residue polypeptide: NADH-quinone oxidoreductase subunit K 1 (102 aa).

Helical transmembrane passes span 5-25 (LYEV…CVVA), 30-50 (VIMM…TFVG), and 62-82 (VFSL…LAMV).

It belongs to the complex I subunit 4L family. In terms of assembly, NDH-1 is composed of 14 different subunits. Subunits NuoA, H, J, K, L, M, N constitute the membrane sector of the complex.

The protein resides in the cell inner membrane. The enzyme catalyses a quinone + NADH + 5 H(+)(in) = a quinol + NAD(+) + 4 H(+)(out). NDH-1 shuttles electrons from NADH, via FMN and iron-sulfur (Fe-S) centers, to quinones in the respiratory chain. The immediate electron acceptor for the enzyme in this species is believed to be ubiquinone. Couples the redox reaction to proton translocation (for every two electrons transferred, four hydrogen ions are translocated across the cytoplasmic membrane), and thus conserves the redox energy in a proton gradient. The protein is NADH-quinone oxidoreductase subunit K 1 of Geobacter sp. (strain M21).